The primary structure comprises 446 residues: MLHPETSPGRGHLLAVLLALLGTAWAEVWPPQLQEQAPMAGALNRKESFLLLSLHNRLRSWVQPPAADMRRLDWSDSLAQLAQARAALCGTPTPSLASGLWRTLQVGWNMQLLPAGLVSFVEVVSLWFAEGQRYSHAAGECARNATCTHYTQLVWATSSQLGCGRHLCSAGQAAIEAFVCAYSPRGNWEVNGKTIVPYKKGAWCSLCTASVSGCFKAWDHAGGLCEVPRNPCRMSCQNHGRLNISTCHCHCPPGYTGRYCQVRCSLQCVHGRFREEECSCVCDIGYGGAQCATKVHFPFHTCDLRIDGDCFMVSSEADTYYRARMKCQRKGGVLAQIKSQKVQDILAFYLGRLETTNEVIDSDFETRNFWIGLTYKTAKDSFRWATGEHQAFTSFAFGQPDNHGFGNCVELQASAAFNWNDQRCKTRNRYICQFAQEHISRWGPGS.

Residues 1–26 (MLHPETSPGRGHLLAVLLALLGTAWA) form the signal peptide. The SCP domain occupies 52–182 (LSLHNRLRSW…AAIEAFVCAY (131 aa)). A glycan (N-linked (GlcNAc...) asparagine) is linked at Asn144. The region spanning 228–261 (PRNPCRMSCQNHGRLNISTCHCHCPPGYTGRYCQ) is the EGF-like domain. Disulfide bonds link Cys236/Cys249, Cys251/Cys260, Cys327/Cys432, and Cys408/Cys424. Residues 306 to 433 (IDGDCFMVSS…CKTRNRYICQ (128 aa)) enclose the C-type lectin domain.

Post-translationally, N-glycosylated. Dectected in all cell lines tested and in peripheral blood cells.

It localises to the secreted. The protein resides in the endoplasmic reticulum. It is found in the golgi apparatus. The protein localises to the endosome. Functionally, binds polysaccharides in a Ca(2+)-independent manner with a preferentially binding to fucoidan, beta-glucans and galactans. The chain is C-type lectin domain family 18 member A (CLEC18A) from Homo sapiens (Human).